Consider the following 31-residue polypeptide: Cyclotide mech-5 (31 aa).

Residues glycine 1–aspartate 31 constitute a cross-link (cyclopeptide (Gly-Asp)). 3 disulfide bridges follow: cysteine 5/cysteine 21, cysteine 9/cysteine 23, and cysteine 14/cysteine 28.

This is a cyclic peptide. In terms of processing, contains 3 disulfide bonds.

In terms of biological role, probably participates in a plant defense mechanism (Potential). Binds to and induces leakage in phospholipd membranes, particularly ones containing 1-palmitoyl-2-oleophosphatidylethanolamine (POPE). In Melicytus chathamicus (Chatham Island mahoe), this protein is Cyclotide mech-5.